The sequence spans 395 residues: Tryptophan synthase beta chain (395 aa).

N6-(pyridoxal phosphate)lysine is present on lysine 86.

This sequence belongs to the TrpB family. Tetramer of two alpha and two beta chains. Requires pyridoxal 5'-phosphate as cofactor.

It carries out the reaction (1S,2R)-1-C-(indol-3-yl)glycerol 3-phosphate + L-serine = D-glyceraldehyde 3-phosphate + L-tryptophan + H2O. It participates in amino-acid biosynthesis; L-tryptophan biosynthesis; L-tryptophan from chorismate: step 5/5. Functionally, the beta subunit is responsible for the synthesis of L-tryptophan from indole and L-serine. The sequence is that of Tryptophan synthase beta chain from Psychromonas ingrahamii (strain DSM 17664 / CCUG 51855 / 37).